A 224-amino-acid polypeptide reads, in one-letter code: EEF1A lysine methyltransferase 3 (224 aa).

S-adenosyl-L-methionine contacts are provided by residues W58, 84–86 (GAG), D105, W134, and A151.

Belongs to the methyltransferase superfamily. METTL21 family.

It localises to the cytoplasm. Its subcellular location is the cytoskeleton. It is found in the microtubule organizing center. The protein localises to the centrosome. It catalyses the reaction L-lysyl-[protein] + 3 S-adenosyl-L-methionine = N(6),N(6),N(6)-trimethyl-L-lysyl-[protein] + 3 S-adenosyl-L-homocysteine + 3 H(+). The enzyme catalyses L-lysyl-[protein] + S-adenosyl-L-methionine = N(6)-methyl-L-lysyl-[protein] + S-adenosyl-L-homocysteine + H(+). The catalysed reaction is N(6)-methyl-L-lysyl-[protein] + S-adenosyl-L-methionine = N(6),N(6)-dimethyl-L-lysyl-[protein] + S-adenosyl-L-homocysteine + H(+). It carries out the reaction N(6),N(6)-dimethyl-L-lysyl-[protein] + S-adenosyl-L-methionine = N(6),N(6),N(6)-trimethyl-L-lysyl-[protein] + S-adenosyl-L-homocysteine + H(+). In terms of biological role, protein-lysine methyltransferase that selectively mono-, di- and trimethylates 'Lys-165' of the translation elongation factors EEF1A1 and EEF1A2 in an aminoacyl-tRNA and GTP-dependent manner. EEF1A1 methylation by EEF1AKMT3 is dynamic as well as inducible by stress conditions, such as ER-stress, and plays a regulatory role on mRNA translation. The sequence is that of EEF1A lysine methyltransferase 3 from Xenopus tropicalis (Western clawed frog).